Here is a 178-residue protein sequence, read N- to C-terminus: MTEIPSSFVLPDPEWIYRVGIGQDSHRFLPDEDPKPCILGGIIFENTPGFEANSDGDVVFHAICNAFSSVTHKGILGGLADELLKTKGITDSVVYLQEAVASLKPTQQVSHLAITIEGKRPKLLPQLPSMRKRIAEVLHIPLDSINITATSGEGLTAMGQGYGVQCFCVLTIMEYCRY.

Asp24, His26, and His61 together coordinate a divalent metal cation. Residue 24–26 (DSH) coordinates 4-CDP-2-C-methyl-D-erythritol 2-phosphate. 150-153 (TSGE) contacts 4-CDP-2-C-methyl-D-erythritol 2-phosphate.

Belongs to the IspF family. Homotrimer. The cofactor is a divalent metal cation.

The catalysed reaction is 4-CDP-2-C-methyl-D-erythritol 2-phosphate = 2-C-methyl-D-erythritol 2,4-cyclic diphosphate + CMP. Its pathway is isoprenoid biosynthesis; isopentenyl diphosphate biosynthesis via DXP pathway; isopentenyl diphosphate from 1-deoxy-D-xylulose 5-phosphate: step 4/6. Functionally, involved in the biosynthesis of isopentenyl diphosphate (IPP) and dimethylallyl diphosphate (DMAPP), two major building blocks of isoprenoid compounds. Catalyzes the conversion of 4-diphosphocytidyl-2-C-methyl-D-erythritol 2-phosphate (CDP-ME2P) to 2-C-methyl-D-erythritol 2,4-cyclodiphosphate (ME-CPP) with a corresponding release of cytidine 5-monophosphate (CMP). The protein is 2-C-methyl-D-erythritol 2,4-cyclodiphosphate synthase of Chlamydia trachomatis serovar A (strain ATCC VR-571B / DSM 19440 / HAR-13).